The following is a 461-amino-acid chain: D-phenylhydantoinase (461 aa).

A divalent metal cation is bound by residues His59, His61, and Lys151. Lys151 carries the post-translational modification N6-carboxylysine. Tyr156 lines the substrate pocket. Positions 182 and 239 each coordinate a divalent metal cation. Residue Ser286 coordinates substrate. Residue Asp313 participates in a divalent metal cation binding. Asn335 serves as a coordination point for substrate.

Belongs to the metallo-dependent hydrolases superfamily. Hydantoinase/dihydropyrimidinase family. In terms of assembly, homotetramer. A divalent metal cation is required as a cofactor. Post-translationally, carboxylation allows a single lysine to coordinate two divalent metal cations.

The enzyme catalyses D-5-phenylhydantoin + H2O = N-carbamoyl-D-phenylglycine + H(+). Catalyzes the stereospecific hydrolysis of the cyclic amide bond of D-hydantoin derivatives with an aromatic side chains at the 5'-position. Has no activity on dihydropyrimidines. The physiological function is unknown. The chain is D-phenylhydantoinase from Escherichia coli O81 (strain ED1a).